Consider the following 376-residue polypeptide: Erythronate-4-phosphate dehydrogenase (376 aa).

Residues Ser45 and Thr67 each coordinate substrate. An NAD(+)-binding site is contributed by Asp147. Arg209 is an active-site residue. Asp233 contributes to the NAD(+) binding site. Glu238 is a catalytic residue. His255 serves as the catalytic Proton donor. Gly258 contacts NAD(+). Residue Tyr259 coordinates substrate.

This sequence belongs to the D-isomer specific 2-hydroxyacid dehydrogenase family. PdxB subfamily. As to quaternary structure, homodimer.

Its subcellular location is the cytoplasm. The enzyme catalyses 4-phospho-D-erythronate + NAD(+) = (R)-3-hydroxy-2-oxo-4-phosphooxybutanoate + NADH + H(+). It participates in cofactor biosynthesis; pyridoxine 5'-phosphate biosynthesis; pyridoxine 5'-phosphate from D-erythrose 4-phosphate: step 2/5. Functionally, catalyzes the oxidation of erythronate-4-phosphate to 3-hydroxy-2-oxo-4-phosphonooxybutanoate. In Shewanella sp. (strain MR-7), this protein is Erythronate-4-phosphate dehydrogenase.